The primary structure comprises 407 residues: tRNA(Ile)-lysidine synthase (407 aa).

36–41 (SGGRDS) contributes to the ATP binding site.

Belongs to the tRNA(Ile)-lysidine synthase family.

It is found in the cytoplasm. It carries out the reaction cytidine(34) in tRNA(Ile2) + L-lysine + ATP = lysidine(34) in tRNA(Ile2) + AMP + diphosphate + H(+). Ligates lysine onto the cytidine present at position 34 of the AUA codon-specific tRNA(Ile) that contains the anticodon CAU, in an ATP-dependent manner. Cytidine is converted to lysidine, thus changing the amino acid specificity of the tRNA from methionine to isoleucine. This chain is tRNA(Ile)-lysidine synthase, found in Tropheryma whipplei (strain TW08/27) (Whipple's bacillus).